Reading from the N-terminus, the 127-residue chain is Ribonuclease VapC9 (127 aa).

One can recognise a PINc domain in the interval 2 to 115 (IVVDASAALA…VTADLRLSDT (114 aa)). The Mg(2+) site is built by D5 and D91.

Belongs to the PINc/VapC protein family. Requires Mg(2+) as cofactor.

Functionally, toxic component of a type II toxin-antitoxin (TA) system. An RNase. The cognate antitoxin is VapB9. The polypeptide is Ribonuclease VapC9 (Mycobacterium tuberculosis (strain CDC 1551 / Oshkosh)).